Here is a 293-residue protein sequence, read N- to C-terminus: Protoheme IX farnesyltransferase (293 aa).

Transmembrane regions (helical) follow at residues 9–29 (LIKP…FLLA), 38–58 (YIIL…SCVL), 86–106 (FVKN…LFLG), 111–131 (LLTI…YSLW), 137–157 (IYST…GYCT), 167–187 (WLLF…ITIF), 211–231 (IHMI…TVLG), 234–254 (SYTF…TGWY), and 271–291 (ILSI…SIFI).

It belongs to the UbiA prenyltransferase family. Protoheme IX farnesyltransferase subfamily.

It is found in the cell inner membrane. It carries out the reaction heme b + (2E,6E)-farnesyl diphosphate + H2O = Fe(II)-heme o + diphosphate. It participates in porphyrin-containing compound metabolism; heme O biosynthesis; heme O from protoheme: step 1/1. Its function is as follows. Converts heme B (protoheme IX) to heme O by substitution of the vinyl group on carbon 2 of heme B porphyrin ring with a hydroxyethyl farnesyl side group. This is Protoheme IX farnesyltransferase from Blochmanniella floridana.